A 212-amino-acid chain; its full sequence is HTH-type transcriptional regulator RutR (212 aa).

The HTH tetR-type domain maps to 17–77 (SAKKKAILSA…AVLRQILDIW (61 aa)). The segment at residues 39–58 (TRLEQIAELAGVSKTNLLYY) is a DNA-binding region (H-T-H motif).

In terms of assembly, homodimer.

Its function is as follows. Master transcription regulator which represses the degradation of pyrimidines (rutABCDEFG) and purines (gcl operon) for maintenance of metabolic balance between pyrimidines and purines. It also regulates the synthesis of pyrimidine nucleotides and arginine from glutamine (carAB) and the supply of glutamate (gadABWX). This is HTH-type transcriptional regulator RutR (rutR) from Escherichia coli O157:H7.